The following is a 316-amino-acid chain: Long form salivary protein D7L1 (316 aa).

Residues 1-23 (MSHTRAVVLAVACLCLILVQVEG) form the signal peptide. 4 cysteine pairs are disulfide-bonded: C40/C76, C72/C131, C181/C214, and C255/C266.

This sequence belongs to the PBP/GOBP family.

It localises to the secreted. Functionally, modulates blood feeding of female mosquitoes on vertebrate species by binding and sequestering different mediators involved in the host response, such as biogenic amines and eicosanoids. Binds serotonin, tryptamine, histamine, leukotriene C4, leukotriene D4 and leukotriene E4. Does not bind octopamine, dopamine, noradrenaline, adrenaline and prostaglandin PGF2alpha. This Anopheles atroparvus (European mosquito) protein is Long form salivary protein D7L1.